The chain runs to 270 residues: 2-epi-5-epi-valiolone 7-phosphate 2-epimerase (270 aa).

Residues E143 and E236 each act as proton donor/acceptor in the active site.

This sequence belongs to the hyi family.

The enzyme catalyses 2-epi-5-epi-valiolone 7-phosphate = 5-epi-valiolone 7-phosphate. Its function is as follows. Involved in the biosynthesis of the alpha-glucosidase inhibitor acarbose. Catalyzes the 2-epimerisation of 2-epi-5-epivaliolone 7-phosphate to yield 5-epi-valiolone 7-phosphate. The polypeptide is 2-epi-5-epi-valiolone 7-phosphate 2-epimerase (acbO) (Actinoplanes sp. (strain ATCC 31044 / CBS 674.73 / SE50/110)).